We begin with the raw amino-acid sequence, 338 residues long: MINPRVFFDIDVDGNRIGRIVIELFADQVPKTAENFRALCTGEKGIGKVSNMPLHYKGSIFHRIIKGFMCQGGDFTHRTGKGGESIYGANFPDESFSRKHDTHGLLSMANRGPNTQTSQFFITTRPTPHLDGKHVVFGRVVSGYNVVEMMENEPVDDQDRPLHNVMIANCGELVLKLPPGALLKKASAVSDESEDEIKNRKRSRSSDDDSSSDEDSEEEERKRTKKKRSRKHSKKDKKKKKRESSNRKRSPEANRHVSRERRDISREKRDNSRERRLSRKEDDRRSPSDKRKEDRRSLSPEKRSSERRVARPVRPRLNYNDPNVEVKGRGRFKYRPTY.

One can recognise a PPIase cyclophilin-type domain in the interval F7–E172. The disordered stretch occupies residues A186–Y338. A compositionally biased stretch (acidic residues) spans D208–E218. Over residues R223–R242 the composition is skewed to basic residues. A compositionally biased stretch (basic and acidic residues) spans E243–V309. Over residues R329–Y338 the composition is skewed to basic residues.

The protein belongs to the cyclophilin-type PPIase family.

The enzyme catalyses [protein]-peptidylproline (omega=180) = [protein]-peptidylproline (omega=0). In terms of biological role, PPIases accelerate the folding of proteins. It catalyzes the cis-trans isomerization of proline imidic peptide bonds in oligopeptides. This is Peptidyl-prolyl cis-trans isomerase cyp11 (cyp11) from Rhizopus delemar (strain RA 99-880 / ATCC MYA-4621 / FGSC 9543 / NRRL 43880) (Mucormycosis agent).